Here is a 418-residue protein sequence, read N- to C-terminus: 3-phosphoshikimate 1-carboxyvinyltransferase (418 aa).

3-phosphoshikimate-binding residues include lysine 26, serine 27, and arginine 31. Lysine 26 is a binding site for phosphoenolpyruvate. Positions 97 and 125 each coordinate phosphoenolpyruvate. Residues serine 170, serine 171, glutamine 172, aspartate 297, asparagine 320, and lysine 324 each contribute to the 3-phosphoshikimate site. Glutamine 172 lines the phosphoenolpyruvate pocket. The Proton acceptor role is filled by aspartate 297. Arginine 328, arginine 375, and lysine 400 together coordinate phosphoenolpyruvate.

The protein belongs to the EPSP synthase family. In terms of assembly, monomer.

It is found in the cytoplasm. It catalyses the reaction 3-phosphoshikimate + phosphoenolpyruvate = 5-O-(1-carboxyvinyl)-3-phosphoshikimate + phosphate. Its pathway is metabolic intermediate biosynthesis; chorismate biosynthesis; chorismate from D-erythrose 4-phosphate and phosphoenolpyruvate: step 6/7. Functionally, catalyzes the transfer of the enolpyruvyl moiety of phosphoenolpyruvate (PEP) to the 5-hydroxyl of shikimate-3-phosphate (S3P) to produce enolpyruvyl shikimate-3-phosphate and inorganic phosphate. The polypeptide is 3-phosphoshikimate 1-carboxyvinyltransferase (Pseudomonas savastanoi pv. phaseolicola (strain 1448A / Race 6) (Pseudomonas syringae pv. phaseolicola (strain 1448A / Race 6))).